Consider the following 236-residue polypeptide: 7-cyano-7-deazaguanine synthase (236 aa).

ATP is bound at residue 7–17; sequence CSGGLDSVSLA. The Zn(2+) site is built by C185, C193, C196, and C199.

The protein belongs to the QueC family. The cofactor is Zn(2+).

The enzyme catalyses 7-carboxy-7-deazaguanine + NH4(+) + ATP = 7-cyano-7-deazaguanine + ADP + phosphate + H2O + H(+). The protein operates within purine metabolism; 7-cyano-7-deazaguanine biosynthesis. Its function is as follows. Catalyzes the ATP-dependent conversion of 7-carboxy-7-deazaguanine (CDG) to 7-cyano-7-deazaguanine (preQ(0)). The polypeptide is 7-cyano-7-deazaguanine synthase (Agrobacterium fabrum (strain C58 / ATCC 33970) (Agrobacterium tumefaciens (strain C58))).